A 1529-amino-acid polypeptide reads, in one-letter code: ABC multidrug transporter AFR2 (1529 aa).

Positions 144 to 394 constitute an ABC transporter 1 domain; it reads GSLRDLIGNR…FVDMGFHCPS (251 aa). Asn-235 and Asn-318 each carry an N-linked (GlcNAc...) asparagine glycan. 5 consecutive transmembrane segments (helical) span residues 510-530, 539-559, 589-609, 614-634, and 648-668; these read LFGNFIMALIIGSVFYNLPVT, ALLFFAILMSAFGSALEILIL, IPYKVMNCIIFNLTLYFMTNL, GAYFFFMLISFTLTMVMSMLF, and LAPAALLILGLVMYTGFAVNV. Asn-742 is a glycosylation site (N-linked (GlcNAc...) asparagine). A helical transmembrane segment spans residues 757-777; that stretch reads GILIGFFLFFTAIYLTATEFI. The ABC transporter 2 domain occupies 845–1087; sequence FSWKDVVYDI…ILIDYFEKNG (243 aa). 881–888 contributes to the ATP binding site; that stretch reads GVSGAGKT. The next 5 membrane-spanning stretches (helical) occupy residues 1193–1213, 1229–1249, 1268–1288, 1314–1334, and 1353–1373; these read YIWAKVALCSLSGLFIGFSFF, VFMMFTIFGQLTQQIMPNFVT, IFILSNIVSEIPWAILMGVII, LMFLYIEMFLLFNATFSIMIV, and MCLIFCGVLASGSSLPGFWVF. Residue Asn-1434 is glycosylated (N-linked (GlcNAc...) asparagine). Residues 1465–1485 form a helical membrane-spanning segment; it reads FGLLWVYVVFNVIAAIGIYWL. A compositionally biased stretch (basic and acidic residues) spans 1493-1505; sequence GKERASEPEDVQE. The disordered stretch occupies residues 1493 to 1529; that stretch reads GKERASEPEDVQEKQVPAQSTEKKYQSISRSSESTVA. Residues 1518–1529 show a composition bias toward polar residues; the sequence is QSISRSSESTVA.

Belongs to the ABC transporter superfamily. ABCG family. PDR (TC 3.A.1.205) subfamily.

The protein resides in the cell membrane. The catalysed reaction is itraconazole(in) + ATP + H2O = itraconazole(out) + ADP + phosphate + H(+). It carries out the reaction voriconazole(in) + ATP + H2O = voriconazole(out) + ADP + phosphate + H(+). It catalyses the reaction fluconazole(in) + ATP + H2O = fluconazole(out) + ADP + phosphate + H(+). Pleiotropic ABC efflux transporter that confers resistance to structurally and functionally unrelated compounds including azoles such as fluconazole (FLC), itraconazole (ITC), posaconazole (POS), and voriconazole (VRC). In Cryptococcus deuterogattii (strain R265) (Cryptococcus gattii VGII (strain R265)), this protein is ABC multidrug transporter AFR2.